A 551-amino-acid polypeptide reads, in one-letter code: Cytosolic Fe-S cluster assembly factor NAR1 (551 aa).

[4Fe-4S] cluster is bound by residues cysteine 20, cysteine 57, cysteine 60, cysteine 63, cysteine 178, and cysteine 242. A disordered region spans residues 395–435 (DPSGHKKRSVRRVAALRSRGRKDSSSEDSTGTPSAISNALG). Residues 421-431 (EDSTGTPSAIS) are compositionally biased toward polar residues. Residue cysteine 451 coordinates [4Fe-4S] cluster.

The protein belongs to the NARF family.

Component of the cytosolic Fe/S protein assembly machinery. Required for maturation of extramitochondrial Fe/S proteins. May play a role in the transfer of pre-assembled Fe/S clusters to target apoproteins. This Candida glabrata (strain ATCC 2001 / BCRC 20586 / JCM 3761 / NBRC 0622 / NRRL Y-65 / CBS 138) (Yeast) protein is Cytosolic Fe-S cluster assembly factor NAR1 (NAR1).